A 205-amino-acid chain; its full sequence is E3 ubiquitin-protein ligase complex slx8-rfp subunit rfp2 (205 aa).

Residues cysteine 147–histidine 190 form an RING-type; degenerate zinc finger.

In terms of assembly, part of an E3 ubiquitin complex including rfp1, rfp2 and slx8. Interacts with slx8.

It localises to the nucleus. The enzyme catalyses S-ubiquitinyl-[E2 ubiquitin-conjugating enzyme]-L-cysteine + [acceptor protein]-L-lysine = [E2 ubiquitin-conjugating enzyme]-L-cysteine + N(6)-ubiquitinyl-[acceptor protein]-L-lysine.. It functions in the pathway protein modification; protein ubiquitination. In terms of biological role, mediates ubiquitination and subsequent desumoylation/degradation of sumoylated proteins and proteins containing SUMO-like domains. Involved in maintaining genome stability where it acts in the cellular response to DNA damage. This Schizosaccharomyces pombe (strain 972 / ATCC 24843) (Fission yeast) protein is E3 ubiquitin-protein ligase complex slx8-rfp subunit rfp2 (rfp2).